The sequence spans 100 residues: Urease subunit gamma (100 aa).

The protein belongs to the urease gamma subunit family. In terms of assembly, heterotrimer of UreA (gamma), UreB (beta) and UreC (alpha) subunits. Three heterotrimers associate to form the active enzyme.

Its subcellular location is the cytoplasm. It catalyses the reaction urea + 2 H2O + H(+) = hydrogencarbonate + 2 NH4(+). It participates in nitrogen metabolism; urea degradation; CO(2) and NH(3) from urea (urease route): step 1/1. This chain is Urease subunit gamma, found in Saccharophagus degradans (strain 2-40 / ATCC 43961 / DSM 17024).